The chain runs to 501 residues: Probable malate:quinone oxidoreductase (501 aa).

The protein belongs to the MQO family. The cofactor is FAD.

It carries out the reaction (S)-malate + a quinone = a quinol + oxaloacetate. Its pathway is carbohydrate metabolism; tricarboxylic acid cycle; oxaloacetate from (S)-malate (quinone route): step 1/1. The polypeptide is Probable malate:quinone oxidoreductase (Mycolicibacterium paratuberculosis (strain ATCC BAA-968 / K-10) (Mycobacterium paratuberculosis)).